The following is an 855-amino-acid chain: Valine--tRNA ligase (855 aa).

The short motif at 42–52 (PTISGKLHIGH) is the 'HIGH' region element. The 'KMSKS' region motif lies at 574-578 (KMSKS). Lys-577 is an ATP binding site.

It belongs to the class-I aminoacyl-tRNA synthetase family. ValS type 2 subfamily. Monomer.

It is found in the cytoplasm. It carries out the reaction tRNA(Val) + L-valine + ATP = L-valyl-tRNA(Val) + AMP + diphosphate. Its function is as follows. Catalyzes the attachment of valine to tRNA(Val). As ValRS can inadvertently accommodate and process structurally similar amino acids such as threonine, to avoid such errors, it has a 'posttransfer' editing activity that hydrolyzes mischarged Thr-tRNA(Val) in a tRNA-dependent manner. The sequence is that of Valine--tRNA ligase from Wolbachia sp. subsp. Brugia malayi (strain TRS).